Consider the following 491-residue polypeptide: Fibrinogen beta chain (491 aa).

The N-terminal stretch at 1 to 30 is a signal peptide; it reads MKRMVSWSFHKLKTMKHLLLLLLCVFLVKS. Glutamine 31 carries the pyrrolidone carboxylic acid modification. The disordered stretch occupies residues 44–75; that stretch reads RGHRPLDKKREEAPSLRPAPPPISGGGYRARP. The segment at 45-47 is beta-chain polymerization, binding distal domain of another fibrin; that stretch reads GHR. Basic and acidic residues predominate over residues 47 to 57; that stretch reads RPLDKKREEAP. Positions 157 to 222 form a coiled coil; it reads KRQKQVKDNE…ESDVSAQMEY (66 aa). 2 disulfide bridges follow: cysteine 231–cysteine 316 and cysteine 241–cysteine 270. Positions 232–488 constitute a Fibrinogen C-terminal domain; that stretch reads NIPVVSGKEC…KMSMKIRPFF (257 aa). A glycan (N-linked (GlcNAc...) asparagine) is linked at asparagine 394. A disulfide bridge links cysteine 424 with cysteine 437.

As to quaternary structure, heterohexamer; disulfide linked. Contains 2 sets of 3 non-identical chains (alpha, beta and gamma). The 2 heterotrimers are in head to head conformation with the N-termini in a small central domain. Post-translationally, conversion of fibrinogen to fibrin is triggered by thrombin, which cleaves fibrinopeptides A and B from alpha and beta chains, and thus exposes the N-terminal polymerization sites responsible for the formation of the soft clot. The soft clot is converted into the hard clot by factor XIIIA which catalyzes the epsilon-(gamma-glutamyl)lysine cross-linking between gamma chains (stronger) and between alpha chains (weaker) of different monomers. In terms of tissue distribution, detected in blood plasma (at protein level).

It is found in the secreted. Its function is as follows. Cleaved by the protease thrombin to yield monomers which, together with fibrinogen alpha (FGA) and fibrinogen gamma (FGG), polymerize to form an insoluble fibrin matrix. Fibrin has a major function in hemostasis as one of the primary components of blood clots. In addition, functions during the early stages of wound repair to stabilize the lesion and guide cell migration during re-epithelialization. Was originally thought to be essential for platelet aggregation, based on in vitro studies using anticoagulated blood. However subsequent studies have shown that it is not absolutely required for thrombus formation in vivo. Enhances expression of SELP in activated platelets. Maternal fibrinogen is essential for successful pregnancy. Fibrin deposition is also associated with infection, where it protects against IFNG-mediated hemorrhage. May also facilitate the antibacterial immune response via both innate and T-cell mediated pathways. This is Fibrinogen beta chain (FGB) from Homo sapiens (Human).